The primary structure comprises 1009 residues: Protein WBSCR14 homolog (1009 aa).

Disordered regions lie at residues 1–20, 304–354, 488–531, and 686–728; these read MSRG…PHDD, MSLG…LHQM, NNQP…DPMM, and ILES…EQEA. Polar residues-rich tracts occupy residues 324–350 and 499–508; these read RTPT…SSAS and RSNLLPTQND. The span at 511 to 526 shows a compositional bias: low complexity; sequence LPQFLQSTQPTPQPQS. The segment covering 686-695 has biased composition (polar residues); the sequence is ILESPSTSGD. One can recognise a bHLH domain in the interval 803–856; that stretch reads RKRILHLHAEQNRRSALKDGFDQLMDIIPDLYSGGVKPTNAVVLAKSADHIRRL. The interval 856–877 is leucine-zipper; the sequence is LQAEKWDKTQKIDEAKAKIEKL.

In terms of tissue distribution, expressed in intestine, neurons, muscle, hypodermis, excretory cell and other tissues.

It localises to the nucleus. The protein resides in the cytoplasm. Its subcellular location is the mitochondrion. Transcription factor that binds to the E box motif 5'-CACGTG-3', probably in a heterodimeric complex with mxl-2. Involved in modulating longevity in response to TOR signaling, dietary restriction, the decline in protein homeostasis associated with normal aging, germline signaling and the insulin-like signaling pathway. Plays a role in autophagy. Involved in regulating migration of the ray 1 precursor cells in the male tail, acting in concert with Wnt and semaphorin signaling pathways. Regulates transcription of genes encoding extracellular matrix (ECM) components which may contribute to the substratum required for migration of the neighboring ray 1 precursor cells. Involved in repressing infection by the microsporidian pathogen N.parisii, probably acting independently of its canonical partner, mxl-2. The polypeptide is Protein WBSCR14 homolog (mml-1) (Caenorhabditis elegans).